We begin with the raw amino-acid sequence, 101 residues long: Ubiquitin-related modifier 1 (101 aa).

Position 101 is a 1-thioglycine (glycine 101). Glycine 101 participates in a covalent cross-link: Glycyl lysine isopeptide (Gly-Lys) (interchain with K-? in acceptor proteins).

It belongs to the URM1 family. As to quaternary structure, component of a complex at least composed of URM1, CTU2/NCS2 and CTU1/ATPBD3. Post-translationally, C-terminal thiocarboxylation occurs in 2 steps, it is first acyl-adenylated (-COAMP) via the hesA/moeB/thiF part of MOCS3, then thiocarboxylated (-COSH) via the rhodanese domain of MOCS3.

It localises to the cytoplasm. The protein operates within tRNA modification; 5-methoxycarbonylmethyl-2-thiouridine-tRNA biosynthesis. In terms of biological role, acts as a sulfur carrier required for 2-thiolation of mcm(5)S(2)U at tRNA wobble positions of cytosolic tRNA(Lys), tRNA(Glu) and tRNA(Gln). Serves as sulfur donor in tRNA 2-thiolation reaction by being thiocarboxylated (-COSH) at its C-terminus by MOCS3. The sulfur is then transferred to tRNA to form 2-thiolation of mcm(5)S(2)U. Also acts as a ubiquitin-like protein (UBL) that is covalently conjugated via an isopeptide bond to lysine residues of target proteins such as MOCS3, ATPBD3, CTU2, USP15 and CAS. The thiocarboxylated form serves as substrate for conjugation and oxidative stress specifically induces the formation of UBL-protein conjugates. The protein is Ubiquitin-related modifier 1 of Bos taurus (Bovine).